Consider the following 612-residue polypeptide: MKKNKVKIDKIPNYEDFKKMKLHELLDLAVLLRKKIIDISENKSAHLSSNLGIVELSMALLYVFDSPQDLIAYDTGHQCYVHKMITDRADKISTIRESNGLSGFQEPNESIHDFISTGHSGNILSICQGFIEKNNSKSKSVIPVIGDAAISNGLAFEALNNIAYNKTPMLIIINDNGMSISKNVGALHKIMSKFQMSKSVFLTEKILRKILFKKEWSKKIYWSIYKSFSKLSKFFKGKNFFESLGFHYFGVIDGNNLKKTINVLKRIKNIVPFGPTILHVKTIKGLGYKEAELDDKGLYHSLKLSDPNLNSNNQTYGSVAANFLEKLIEYDNNIQIINPAMTLSSNFLNLSKKFPNNYEDVGIAEEHAVTKAAGMAIANKKVFVSIYSTFLQRSYDNLLHDVARLELPITFLVDRCDLSYSDGDTHHGIYDIGFLKSIPNTIITCASNKFELERLIILAYQNKSNPFFIRYTKEKCEDIEVKKEFSFGSWVYALQTKESKTCIISYGDIINDLKKEIKTKSIDLINAVFITNYQKENVLRILSTYKNIYVVEKVFDSNCLGDDLIILANENKLSCNIKKINIRNNKIGFGNKEDIDKKLNIDMNSIFAEIKS.

Residues His-77 and Gly-118–Ser-120 contribute to the thiamine diphosphate site. Asp-147 contributes to the Mg(2+) binding site. Thiamine diphosphate-binding positions include Ala-148–Ala-149, Asn-176, Tyr-288, and Glu-365. Asn-176 is a binding site for Mg(2+).

This sequence belongs to the transketolase family. DXPS subfamily. As to quaternary structure, homodimer. It depends on Mg(2+) as a cofactor. Thiamine diphosphate is required as a cofactor.

It catalyses the reaction D-glyceraldehyde 3-phosphate + pyruvate + H(+) = 1-deoxy-D-xylulose 5-phosphate + CO2. It functions in the pathway metabolic intermediate biosynthesis; 1-deoxy-D-xylulose 5-phosphate biosynthesis; 1-deoxy-D-xylulose 5-phosphate from D-glyceraldehyde 3-phosphate and pyruvate: step 1/1. Catalyzes the acyloin condensation reaction between C atoms 2 and 3 of pyruvate and glyceraldehyde 3-phosphate to yield 1-deoxy-D-xylulose-5-phosphate (DXP). This is 1-deoxy-D-xylulose-5-phosphate synthase from Malacoplasma penetrans (strain HF-2) (Mycoplasma penetrans).